The sequence spans 158 residues: Endoribonuclease YbeY (158 aa).

Zn(2+)-binding residues include His118, His122, and His128.

The protein belongs to the endoribonuclease YbeY family. It depends on Zn(2+) as a cofactor.

The protein localises to the cytoplasm. In terms of biological role, single strand-specific metallo-endoribonuclease involved in late-stage 70S ribosome quality control and in maturation of the 3' terminus of the 16S rRNA. The protein is Endoribonuclease YbeY of Bartonella quintana (strain Toulouse) (Rochalimaea quintana).